Here is a 1133-residue protein sequence, read N- to C-terminus: Protein cordon-bleu (1133 aa).

Positions 1–11 (MKARAPPPPGK) are enriched in pro residues. The segment at 1–25 (MKARAPPPPGKPAAQNVHSEQKLPH) is disordered. A phosphoserine mark is found at Ser-31, Ser-34, Ser-196, Ser-219, Ser-256, and Ser-278. Disordered stretches follow at residues 246 to 393 (AEHL…SVNG) and 442 to 568 (QGGI…GQAS). The span at 272-301 (CVTTPNSPSLHSRSLTLGPSLSLGNISGMS) shows a compositional bias: polar residues. Positions 307-312 (KKRRAP) match the KKRRAP 1 motif. A phosphoserine mark is found at Ser-330 and Ser-333. Residues 340–345 (KKRRAP) carry the KKRRAP 2 motif. Pro residues predominate over residues 345–358 (PAPPPPQPPPPSPV). The residue at position 356 (Ser-356) is a Phosphoserine. Over residues 361–371 (NRKEDKEENRK) the composition is skewed to basic and acidic residues. Composition is skewed to polar residues over residues 382 to 393 (TDTSSLTSSVNG) and 442 to 464 (QGGIASQRSHLPPYQTEQSQPFI). The residue at position 447 (Ser-447) is a Phosphoserine. A compositionally biased stretch (basic and acidic residues) spans 512-524 (STDDPKAKDKDKM). Ser-614 carries the phosphoserine modification. The disordered stretch occupies residues 664-720 (APSTTITATSEKPQRDETKAGFTLTTPEQQPASQEYGAPPEEDRSRPHSAVSCPVKV). Composition is skewed to polar residues over residues 665 to 674 (PSTTITATSE) and 686 to 696 (TLTTPEQQPAS). The residue at position 924 (Ser-924) is a Phosphoserine. Disordered stretches follow at residues 942-961 (PSPLSADGQNSDDALPSSIF) and 990-1018 (HTSGGRDKLRKTAEQASEGRPKKPSYVEA). WH2 domains lie at 981–1001 (LHSALMEAIHTSGGRDKLRKT) and 1021–1041 (ERSALLAAIRGHSGTLSLRKV). Basic and acidic residues predominate over residues 993-1010 (GGRDKLRKTAEQASEGRP). The disordered stretch occupies residues 1063-1091 (DKPQQEDRGLPPPPALPPPSTPASQVPSA). The span at 1072–1083 (LPPPPALPPPST) shows a compositional bias: pro residues. Ser-1099 carries the post-translational modification Phosphoserine. The 21-residue stretch at 1109–1129 (ARQALMDAIRSGTGAARLRKV) folds into the WH2 3 domain.

As to quaternary structure, identified in a complex composed of ACTA1, COBL, GSN AND TMSB4X. Identified in a complex composed of COBL, PACSIN1 and WASL. Interacts with PACSIN1, PACSIN2 and PACSIN3. Interacts (via WH2 domains) with actin monomers. Interacts with both PACSIN1 and DBNL. As to expression, detected in brain (at protein level).

Its subcellular location is the cell membrane. The protein localises to the cytoplasm. The protein resides in the cytoskeleton. It is found in the cell projection. It localises to the ruffle. Its subcellular location is the cytosol. Its function is as follows. Plays an important role in the reorganization of the actin cytoskeleton. Binds to and sequesters actin monomers (G actin). Nucleates actin polymerization by assembling three actin monomers in cross-filament orientation and thereby promotes growth of actin filaments at the barbed end. Can also mediate actin depolymerization at barbed ends and severing of actin filaments. Promotes formation of cell ruffles. Regulates dendrite branching in Purkinje cells. Regulates neuron morphogenesis and increases branching of axons and dendrites. The chain is Protein cordon-bleu (Cobl) from Rattus norvegicus (Rat).